Here is a 318-residue protein sequence, read N- to C-terminus: UPF0725 protein At3g44770 (318 aa).

The protein belongs to the UPF0725 (EMB2204) family.

The sequence is that of UPF0725 protein At3g44770 from Arabidopsis thaliana (Mouse-ear cress).